The chain runs to 45 residues: uncharacterized protein (45 aa).

This is an uncharacterized protein from Archaeoglobus fulgidus (strain ATCC 49558 / DSM 4304 / JCM 9628 / NBRC 100126 / VC-16).